Reading from the N-terminus, the 401-residue chain is Putative phosphatidylinositol 4-phosphate 5-kinase 11 (401 aa).

Positions 1 to 390 (MELRATVENR…RFQDFVSNIF (390 aa)) constitute a PIPK domain. Positions 242–260 (SFKSNSTKSMKTASSSPDR) are enriched in polar residues. The disordered stretch occupies residues 242 to 268 (SFKSNSTKSMKTASSSPDRSSVAMYSC). The tract at residues 350–371 (YGMKKRIEHCYKSIQYNSNSIS) is activation loop.

The enzyme catalyses a 1,2-diacyl-sn-glycero-3-phospho-(1D-myo-inositol 4-phosphate) + ATP = a 1,2-diacyl-sn-glycero-3-phospho-(1D-myo-inositol-4,5-bisphosphate) + ADP + H(+). The sequence is that of Putative phosphatidylinositol 4-phosphate 5-kinase 11 (PIP5K11) from Arabidopsis thaliana (Mouse-ear cress).